We begin with the raw amino-acid sequence, 623 residues long: Chaperone protein HtpG (623 aa).

An a; substrate-binding region spans residues 1–336 (MVSKQQTMGF…ASDLPLNISR (336 aa)). The b stretch occupies residues 337 to 550 (EILQDNKQVE…EQDMGLEMQR (214 aa)). The interval 551–623 (ILQAAGQQIP…NRVNRLLVSS (73 aa)) is c.

This sequence belongs to the heat shock protein 90 family. In terms of assembly, homodimer.

The protein localises to the cytoplasm. Its function is as follows. Molecular chaperone. Has ATPase activity. In Legionella pneumophila (strain Lens), this protein is Chaperone protein HtpG.